The following is a 552-amino-acid chain: Urocanate hydratase (552 aa).

Residues 49 to 50 (GG), Gln-127, 173 to 175 (GMG), Asp-193, 239 to 240 (NA), 260 to 264 (QTSAH), 270 to 271 (YI), and Tyr-319 each bind NAD(+). Residue Cys-407 is part of the active site. Position 489 (Gly-489) interacts with NAD(+).

It belongs to the urocanase family. NAD(+) serves as cofactor.

It is found in the cytoplasm. The enzyme catalyses 4-imidazolone-5-propanoate = trans-urocanate + H2O. The protein operates within amino-acid degradation; L-histidine degradation into L-glutamate; N-formimidoyl-L-glutamate from L-histidine: step 2/3. Catalyzes the conversion of urocanate to 4-imidazolone-5-propionate. The protein is Urocanate hydratase of Bacillus cereus (strain B4264).